The chain runs to 405 residues: NADH-quinone oxidoreductase subunit D (405 aa).

Belongs to the complex I 49 kDa subunit family. In terms of assembly, NDH-1 is composed of 14 different subunits. Subunits NuoB, C, D, E, F, and G constitute the peripheral sector of the complex.

The protein resides in the cell inner membrane. The enzyme catalyses a quinone + NADH + 5 H(+)(in) = a quinol + NAD(+) + 4 H(+)(out). In terms of biological role, NDH-1 shuttles electrons from NADH, via FMN and iron-sulfur (Fe-S) centers, to quinones in the respiratory chain. The immediate electron acceptor for the enzyme in this species is believed to be ubiquinone. Couples the redox reaction to proton translocation (for every two electrons transferred, four hydrogen ions are translocated across the cytoplasmic membrane), and thus conserves the redox energy in a proton gradient. This chain is NADH-quinone oxidoreductase subunit D, found in Leptospira borgpetersenii serovar Hardjo-bovis (strain L550).